The sequence spans 1386 residues: Rab3 GTPase-activating protein non-catalytic subunit (1386 aa).

A disordered region spans residues 31–69 (GALRRDPSKTSNWEDDSWGAWEETEPQEPEEEGNTSKTQ). S38 is subject to Phosphoserine. Acidic residues predominate over residues 43-63 (WEDDSWGAWEETEPQEPEEEG). Phosphoserine is present on S448. Position 899 is a phosphothreonine (T899). Phosphoserine is present on S914. Residues 959–973 (REKDVENPDEPREGI) are compositionally biased toward basic and acidic residues. The segment at 959–982 (REKDVENPDEPREGIARSPPEVSE) is disordered. Phosphoserine is present on S976.

The protein belongs to the Rab3-GAP regulatory subunit family. The Rab3 GTPase-activating complex is a heterodimer composed of Rab3gap1 and Rab3gap2. The Rab3 GTPase-activating complex interacts with DMXL2. Interacts with LMAN1.

It is found in the cytoplasm. Its subcellular location is the endoplasmic reticulum. Its function is as follows. Regulatory subunit of the Rab3 GTPase-activating (Rab3GAP) complex composed of RAB3GAP1 and RAB3GAP2, which has GTPase-activating protein (GAP) activity towards various Rab3 subfamily members (RAB3A, RAB3B, RAB3C and RAB3D), RAB5A and RAB43, and guanine nucleotide exchange factor (GEF) activity towards RAB18. As part of the Rab3GAP complex, acts as a GAP for Rab3 proteins by converting active RAB3-GTP to the inactive form RAB3-GDP. Rab3 proteins are involved in regulated exocytosis of neurotransmitters and hormones. The Rab3GAP complex acts as a GEF for RAB18 by promoting the conversion of inactive RAB18-GDP to the active form RAB18-GTP. Recruits and stabilizes RAB18 at the cis-Golgi membrane in fibroblasts where RAB18 is most likely activated. Also involved in RAB18 recruitment at the endoplasmic reticulum (ER) membrane where it maintains proper ER structure. Required for normal eye and brain development. May participate in neurodevelopmental processes such as proliferation, migration and differentiation before synapse formation, and non-synaptic vesicular release of neurotransmitters. In Rattus norvegicus (Rat), this protein is Rab3 GTPase-activating protein non-catalytic subunit.